The chain runs to 595 residues: Elongation factor 4 (595 aa).

The 182-residue stretch at 2-183 (KNIRNFCIIA…TIVEKVPAPK (182 aa)) folds into the tr-type G domain. GTP is bound by residues 14-19 (DHGKST) and 130-133 (NKID).

The protein belongs to the TRAFAC class translation factor GTPase superfamily. Classic translation factor GTPase family. LepA subfamily.

Its subcellular location is the cell inner membrane. It carries out the reaction GTP + H2O = GDP + phosphate + H(+). In terms of biological role, required for accurate and efficient protein synthesis under certain stress conditions. May act as a fidelity factor of the translation reaction, by catalyzing a one-codon backward translocation of tRNAs on improperly translocated ribosomes. Back-translocation proceeds from a post-translocation (POST) complex to a pre-translocation (PRE) complex, thus giving elongation factor G a second chance to translocate the tRNAs correctly. Binds to ribosomes in a GTP-dependent manner. This is Elongation factor 4 from Parabacteroides distasonis (strain ATCC 8503 / DSM 20701 / CIP 104284 / JCM 5825 / NCTC 11152).